A 335-amino-acid polypeptide reads, in one-letter code: Phospho-N-acetylmuramoyl-pentapeptide-transferase (335 aa).

10 consecutive transmembrane segments (helical) span residues 5 to 25, 50 to 70, 78 to 98, 114 to 133, 145 to 165, 177 to 197, 200 to 220, 236 to 256, 262 to 282, and 311 to 331; these read IFLA…LMIP, TPTM…LIMA, MVMV…DDFI, LIGQ…RYLG, IHLE…VGIT, LAAG…TLAA, GGGV…AAAV, VFMG…LAVL, ILLI…LQVF, and VVMV…IAYM.

The protein belongs to the glycosyltransferase 4 family. MraY subfamily. Mg(2+) is required as a cofactor.

It localises to the cell membrane. The enzyme catalyses UDP-N-acetyl-alpha-D-muramoyl-L-alanyl-gamma-D-glutamyl-meso-2,6-diaminopimeloyl-D-alanyl-D-alanine + di-trans,octa-cis-undecaprenyl phosphate = di-trans,octa-cis-undecaprenyl diphospho-N-acetyl-alpha-D-muramoyl-L-alanyl-D-glutamyl-meso-2,6-diaminopimeloyl-D-alanyl-D-alanine + UMP. Its pathway is cell wall biogenesis; peptidoglycan biosynthesis. Functionally, catalyzes the initial step of the lipid cycle reactions in the biosynthesis of the cell wall peptidoglycan: transfers peptidoglycan precursor phospho-MurNAc-pentapeptide from UDP-MurNAc-pentapeptide onto the lipid carrier undecaprenyl phosphate, yielding undecaprenyl-pyrophosphoryl-MurNAc-pentapeptide, known as lipid I. This is Phospho-N-acetylmuramoyl-pentapeptide-transferase from Desulfitobacterium hafniense (strain DSM 10664 / DCB-2).